Here is a 54-residue protein sequence, read N- to C-terminus: Preprotein translocase subunit SecG (54 aa).

Residues 1–30 are Cytoplasmic-facing; the sequence is MSKNKQDAGLSTSAGLVRYMDEDASKIKIA. Residues 31 to 52 form a helical membrane-spanning segment; the sequence is PEKVLGITISIMVLLFILNYGL. At 53–54 the chain is on the extracellular side; the sequence is LA.

The protein belongs to the SEC61-beta family. As to quaternary structure, component of the protein translocase complex. Heterotrimer consisting of alpha (SecY), beta (SecG) and gamma (SecE) subunits. Can form oligomers of the heterotrimer.

It localises to the cell membrane. Involved in protein export. The function of the beta subunit is unknown, but it may be involved in stabilization of the trimeric complex. This Methanococcus aeolicus (strain ATCC BAA-1280 / DSM 17508 / OCM 812 / Nankai-3) protein is Preprotein translocase subunit SecG.